The primary structure comprises 335 residues: Transaldolase (335 aa).

Catalysis depends on Lys135, which acts as the Schiff-base intermediate with substrate.

This sequence belongs to the transaldolase family. Type 1 subfamily. In terms of assembly, homodimer.

The protein resides in the cytoplasm. The catalysed reaction is D-sedoheptulose 7-phosphate + D-glyceraldehyde 3-phosphate = D-erythrose 4-phosphate + beta-D-fructose 6-phosphate. Its pathway is carbohydrate degradation; pentose phosphate pathway; D-glyceraldehyde 3-phosphate and beta-D-fructose 6-phosphate from D-ribose 5-phosphate and D-xylulose 5-phosphate (non-oxidative stage): step 2/3. Functionally, transaldolase is important for the balance of metabolites in the pentose-phosphate pathway. In Prochlorococcus marinus (strain SARG / CCMP1375 / SS120), this protein is Transaldolase.